The sequence spans 201 residues: Large ribosomal subunit protein uL4 (201 aa).

The interval 44–71 is disordered; sequence RAQKTRAEVSGSGKKPWRQKGTGRARSG.

It belongs to the universal ribosomal protein uL4 family. Part of the 50S ribosomal subunit.

In terms of biological role, one of the primary rRNA binding proteins, this protein initially binds near the 5'-end of the 23S rRNA. It is important during the early stages of 50S assembly. It makes multiple contacts with different domains of the 23S rRNA in the assembled 50S subunit and ribosome. Its function is as follows. Forms part of the polypeptide exit tunnel. This Proteus mirabilis (strain HI4320) protein is Large ribosomal subunit protein uL4.